Reading from the N-terminus, the 235-residue chain is Aspartate/glutamate leucyltransferase (235 aa).

It belongs to the R-transferase family. Bpt subfamily.

Its subcellular location is the cytoplasm. It catalyses the reaction N-terminal L-glutamyl-[protein] + L-leucyl-tRNA(Leu) = N-terminal L-leucyl-L-glutamyl-[protein] + tRNA(Leu) + H(+). The catalysed reaction is N-terminal L-aspartyl-[protein] + L-leucyl-tRNA(Leu) = N-terminal L-leucyl-L-aspartyl-[protein] + tRNA(Leu) + H(+). In terms of biological role, functions in the N-end rule pathway of protein degradation where it conjugates Leu from its aminoacyl-tRNA to the N-termini of proteins containing an N-terminal aspartate or glutamate. In Pseudomonas syringae pv. tomato (strain ATCC BAA-871 / DC3000), this protein is Aspartate/glutamate leucyltransferase.